Consider the following 339-residue polypeptide: Lipoate-protein ligase A (339 aa).

The 188-residue stretch at 29–216 (DPSQQVLFLW…SFENFYAGKA (188 aa)) folds into the BPL/LPL catalytic domain. Residues arginine 71, 76–79 (GAVF), and lysine 134 each bind ATP. Lysine 134 is a binding site for (R)-lipoate.

It belongs to the LplA family. Monomer.

The protein localises to the cytoplasm. The catalysed reaction is L-lysyl-[lipoyl-carrier protein] + (R)-lipoate + ATP = N(6)-[(R)-lipoyl]-L-lysyl-[lipoyl-carrier protein] + AMP + diphosphate + H(+). It participates in protein modification; protein lipoylation via exogenous pathway; protein N(6)-(lipoyl)lysine from lipoate: step 1/2. Its pathway is protein modification; protein lipoylation via exogenous pathway; protein N(6)-(lipoyl)lysine from lipoate: step 2/2. In terms of biological role, catalyzes both the ATP-dependent activation of exogenously supplied lipoate to lipoyl-AMP and the transfer of the activated lipoyl onto the lipoyl domains of lipoate-dependent enzymes. In Bdellovibrio bacteriovorus (strain ATCC 15356 / DSM 50701 / NCIMB 9529 / HD100), this protein is Lipoate-protein ligase A.